The following is a 125-amino-acid chain: Holo-[acyl-carrier-protein] synthase (125 aa).

Mg(2+) is bound by residues Glu9 and Gln58.

The protein belongs to the P-Pant transferase superfamily. AcpS family. The cofactor is Mg(2+).

The protein localises to the cytoplasm. It carries out the reaction apo-[ACP] + CoA = holo-[ACP] + adenosine 3',5'-bisphosphate + H(+). Transfers the 4'-phosphopantetheine moiety from coenzyme A to a Ser of acyl-carrier-protein. The protein is Holo-[acyl-carrier-protein] synthase of Rhodopirellula baltica (strain DSM 10527 / NCIMB 13988 / SH1).